The following is a 245-amino-acid chain: 1-(5-phosphoribosyl)-5-[(5-phosphoribosylamino)methylideneamino] imidazole-4-carboxamide isomerase (245 aa).

The Proton acceptor role is filled by Asp8. The active-site Proton donor is the Asp130.

This sequence belongs to the HisA/HisF family.

The protein resides in the cytoplasm. The enzyme catalyses 1-(5-phospho-beta-D-ribosyl)-5-[(5-phospho-beta-D-ribosylamino)methylideneamino]imidazole-4-carboxamide = 5-[(5-phospho-1-deoxy-D-ribulos-1-ylimino)methylamino]-1-(5-phospho-beta-D-ribosyl)imidazole-4-carboxamide. The protein operates within amino-acid biosynthesis; L-histidine biosynthesis; L-histidine from 5-phospho-alpha-D-ribose 1-diphosphate: step 4/9. This chain is 1-(5-phosphoribosyl)-5-[(5-phosphoribosylamino)methylideneamino] imidazole-4-carboxamide isomerase, found in Pseudomonas putida (strain ATCC 700007 / DSM 6899 / JCM 31910 / BCRC 17059 / LMG 24140 / F1).